A 926-amino-acid chain; its full sequence is MSRRGGGPVTVLNVAEKPSVAKSVAGILSRGTFRTREGRSRYNKIFEFDYAINGQPCRMLMTSVIGHLMELEFADRYRKWHSCDPADLYQAPVMKHVPEDKKDIKKTLEEEARKSDWLVLWLDCDREGENIAFEVVDVCRAVKHNLFIRRAHFSALIDRDIHEAVQNLRDPNQLFAEAVDARQEIDLRIGASFTRFQTMLLRDRFAIDSTGEERSRVISYGPCQFPTLGFIVERYWEIQAHEPEEFWTINCSHQSEEGLATFNWMRGHLFDYASAVILYEMCVEEPTATVMNVPHPRERFKYPPYPLNTIELEKRASRYFRLSSEHTMKVAEELYQAGFISYPRTETDSFSSRTDLRAMVEEQTRHPAWGSYAQRLLEPEGGLWRNPANGGHDDKAHPPIHPTKFSSGESNWSRDHLNVYELVVRHYLACVSQPAVAAETTVEIDIAGERFSASGRAILAKNYLEVYRFESWGGSVIPVYEKGQQFIPTTLTLDAAVTRPPPLLCEADLLSCMDKAGIGTDATMHDHIKKLLDRGYATKDANTRFSPTNLGEALVMGYDDMGYELWKPNLRALMEHDMNEVSVGRKTKAEVLETCLQQMKACFLDARVKKSKLLEAMTIFFERSNNTDESESQTAGEVVRRCNLCNESDMALRKNRDGNFMVGCMNYPQCRNAVWLPGPTLEASVTTNVCQSCGPGPVYKILFKFRQIGIPPGFDVNHLGCVGGCDDILKQLIDICGTGSRSQARRTPGTAPSNNIQGSNTRQSNVCIHCQQRGHASTNCPSRVPASRNSRPTATNPRNDESTVSCNTCGSQCVLRTANTEANRGRQFFSCPTQGCSFFAWEDSINNSSGNATTGSNSGGSGRRGSRGRGRGGRGGQSSGGRRGSGTSFVSATGEPVSGIRCFSCGDPSHFANACPNRNNSNGNYF.

The region spanning 10–154 (TVLNVAEKPS…NLFIRRAHFS (145 aa)) is the Toprim domain. Mg(2+) contacts are provided by E16, D123, and D125. One can recognise a Topo IA-type catalytic domain in the interval 172–604 (NQLFAEAVDA…CLQQMKACFL (433 aa)). Positions 219 to 224 (SYGPCQ) are interaction with DNA. The O-(5'-phospho-DNA)-tyrosine intermediate role is filled by Y342. Residues 642 to 670 (CNLCNESDMALRKNRDGNFMVGCMNYPQC) form a C4-type zinc finger. 2 disordered regions span residues 740-760 (SRSQ…QGSN) and 775-806 (HAST…TVSC). Positions 750–760 (TAPSNNIQGSN) are enriched in polar residues. The CCHC-type 1 zinc-finger motif lies at 767–782 (CIHCQQRGHASTNCPS). Zn(2+) contacts are provided by C806, C809, C831, and C836. Residues 806–845 (CNTCGSQCVLRTANTEANRGRQFFSCPTQGCSFFAWEDSI) form a GRF-type zinc finger. Residues 849 to 890 (SGNATTGSNSGGSGRRGSRGRGRGGRGGQSSGGRRGSGTSFV) form a disordered region. Over residues 873–884 (GRGGQSSGGRRG) the composition is skewed to gly residues. The CCHC-type 2 zinc finger occupies 901-917 (RCFSCGDPSHFANACPN).

It belongs to the type IA topoisomerase family. As to quaternary structure, component of the RMI complex, containing at least TOP3A and RMI1. The RMI complex interacts with RECQL4A. It depends on Mg(2+) as a cofactor.

The enzyme catalyses ATP-independent breakage of single-stranded DNA, followed by passage and rejoining.. Releases the supercoiling and torsional tension of DNA introduced during the DNA replication and transcription by transiently cleaving and rejoining one strand of the DNA duplex. Introduces a single-strand break via transesterification at a target site in duplex DNA. The scissile phosphodiester is attacked by the catalytic tyrosine of the enzyme, resulting in the formation of a DNA-(5'-phosphotyrosyl)-enzyme intermediate and the expulsion of a 3'-OH DNA strand. The free DNA strand then undergoes passage around the unbroken strand thus removing DNA supercoils. Finally, in the religation step, the DNA 3'-OH attacks the covalent intermediate to expel the active-site tyrosine and restore the DNA phosphodiester backbone. Essential component of the RMI complex, a complex that plays an important role in the resolution step of homologous recombination, in a process called Holliday Junction dissolution, to limit DNA crossover formation in cells. Together with RMI1, is essential for the resolution of meiotic recombination intermediates, a step that prevents entanglement of the parental chromosomes. May have DNA decatenation activity. The chain is DNA topoisomerase 3-alpha (TOP3A) from Arabidopsis thaliana (Mouse-ear cress).